Reading from the N-terminus, the 625-residue chain is Thioredoxin domain-containing protein 6 (625 aa).

The segment at 158 to 302 (KSYTVAIIKP…FFFPNFKISN (145 aa)) is NDK. Residues 594–625 (GETPETSASDISRNAAAQGDDPEQDESKEMEE) are disordered. The span at 613–625 (DDPEQDESKEMEE) shows a compositional bias: acidic residues.

This sequence belongs to the NDK family. Monomer and homodimer.

It localises to the cytoplasm. The protein localises to the cytoskeleton. The protein resides in the cilium axoneme. It is found in the dynein axonemal particle. In terms of biological role, may be a regulator of microtubule physiology. The chain is Thioredoxin domain-containing protein 6 from Xenopus laevis (African clawed frog).